We begin with the raw amino-acid sequence, 184 residues long: Der GTPase-activating protein YihI (184 aa).

The interval 1-107 (MNRPVKGAAD…VVAAKPTMSP (107 aa)) is disordered. The span at 21-32 (TREELEREARER) shows a compositional bias: basic and acidic residues. A compositionally biased stretch (low complexity) spans 80 to 95 (SAVAKPKPKSKPSAPV).

It belongs to the YihI family. Interacts with Der.

Its function is as follows. A GTPase-activating protein (GAP) that modifies Der/EngA GTPase function. May play a role in ribosome biogenesis. The sequence is that of Der GTPase-activating protein YihI from Pectobacterium carotovorum subsp. carotovorum (strain PC1).